Consider the following 75-residue polypeptide: Small ribosomal subunit protein bS18 (75 aa).

This sequence belongs to the bacterial ribosomal protein bS18 family. In terms of assembly, part of the 30S ribosomal subunit. Forms a tight heterodimer with protein bS6.

Functionally, binds as a heterodimer with protein bS6 to the central domain of the 16S rRNA, where it helps stabilize the platform of the 30S subunit. The sequence is that of Small ribosomal subunit protein bS18 from Vibrio atlanticus (strain LGP32) (Vibrio splendidus (strain Mel32)).